A 169-amino-acid polypeptide reads, in one-letter code: Large ribosomal subunit protein uL10 (169 aa).

The protein belongs to the universal ribosomal protein uL10 family. Part of the ribosomal stalk of the 50S ribosomal subunit. The N-terminus interacts with L11 and the large rRNA to form the base of the stalk. The C-terminus forms an elongated spine to which L12 dimers bind in a sequential fashion forming a multimeric L10(L12)X complex.

In terms of biological role, forms part of the ribosomal stalk, playing a central role in the interaction of the ribosome with GTP-bound translation factors. The polypeptide is Large ribosomal subunit protein uL10 (Rickettsia typhi (strain ATCC VR-144 / Wilmington)).